A 76-amino-acid chain; its full sequence is Parvalbumin beta 3 (76 aa).

Ala-1 carries the N-acetylalanine modification. Positions 31–66 (KSPEEVKKFFAIIDQDHSGFIEEEELKLFLQTFSAG) constitute an EF-hand domain. Ca(2+) contacts are provided by Asp-44, Asp-46, Ser-48, Phe-50, Glu-52, and Glu-55.

Belongs to the parvalbumin family.

In terms of biological role, in muscle, parvalbumin is thought to be involved in relaxation after contraction. It binds two calcium ions. In Merluccius polylepis (Southern hake), this protein is Parvalbumin beta 3.